Here is a 476-residue protein sequence, read N- to C-terminus: Bifunctional protein HldE (476 aa).

A ribokinase region spans residues 1–319 (MKVTLPAFEK…GALASHQGES (319 aa)). Residue 195–198 (NMSE) coordinates ATP. Asp-264 is an active-site residue. Residues 345–476 (MTNGCFDILH…SIIQNIMARQ (132 aa)) form a cytidylyltransferase region.

This sequence in the N-terminal section; belongs to the carbohydrate kinase PfkB family. It in the C-terminal section; belongs to the cytidylyltransferase family. Homodimer.

It carries out the reaction D-glycero-beta-D-manno-heptose 7-phosphate + ATP = D-glycero-beta-D-manno-heptose 1,7-bisphosphate + ADP + H(+). The enzyme catalyses D-glycero-beta-D-manno-heptose 1-phosphate + ATP + H(+) = ADP-D-glycero-beta-D-manno-heptose + diphosphate. It functions in the pathway nucleotide-sugar biosynthesis; ADP-L-glycero-beta-D-manno-heptose biosynthesis; ADP-L-glycero-beta-D-manno-heptose from D-glycero-beta-D-manno-heptose 7-phosphate: step 1/4. The protein operates within nucleotide-sugar biosynthesis; ADP-L-glycero-beta-D-manno-heptose biosynthesis; ADP-L-glycero-beta-D-manno-heptose from D-glycero-beta-D-manno-heptose 7-phosphate: step 3/4. Catalyzes the phosphorylation of D-glycero-D-manno-heptose 7-phosphate at the C-1 position to selectively form D-glycero-beta-D-manno-heptose-1,7-bisphosphate. In terms of biological role, catalyzes the ADP transfer from ATP to D-glycero-beta-D-manno-heptose 1-phosphate, yielding ADP-D-glycero-beta-D-manno-heptose. The protein is Bifunctional protein HldE of Shewanella denitrificans (strain OS217 / ATCC BAA-1090 / DSM 15013).